Reading from the N-terminus, the 220-residue chain is Probable acrEF/envCD operon repressor (220 aa).

Positions 10 to 70 (LKTRQELIET…EMWLQQPSLR (61 aa)) constitute an HTH tetR-type domain. The segment at residues 33–52 (TLNDIADAANVTRGAIYWHF) is a DNA-binding region (H-T-H motif).

Potential regulator protein for the acrEF/envCD genes. In Escherichia coli O157:H7, this protein is Probable acrEF/envCD operon repressor (envR).